A 202-amino-acid polypeptide reads, in one-letter code: Indolepyruvate oxidoreductase subunit IorB (202 aa).

Heterodimer of the IorA and IorB subunits.

The catalysed reaction is indole-3-pyruvate + 2 oxidized [2Fe-2S]-[ferredoxin] + CoA = (indol-3-yl)acetyl-CoA + 2 reduced [2Fe-2S]-[ferredoxin] + CO2 + H(+). In terms of biological role, catalyzes the ferredoxin-dependent oxidative decarboxylation of arylpyruvates. The sequence is that of Indolepyruvate oxidoreductase subunit IorB (iorB) from Pyrococcus horikoshii (strain ATCC 700860 / DSM 12428 / JCM 9974 / NBRC 100139 / OT-3).